The following is a 126-amino-acid chain: SFESIIPFIVTAPLGRLTFYVEHYPWIDFKSHMKEILDFLEGSLVSDVHSHKLETSVLDNSTSSSYNPVSGMLFVNDLLTMTVVNFFGCNSRLNSYHRFDMTKLDINTFLKALADAFKKIANYLEV.

Belongs to the poxviridae DNA-directed RNA polymerase 35 kDa subunit family. As to quaternary structure, the DNA-dependent RNA polymerase used for intermediate and late genes expression consists of eight subunits 147 kDa, 133 kDa, 35 kDa, 30 kDa, 22 kDa, 19 kDa, 18 kDa and 7 kDa totalling more than 500 kDa in mass. The same holoenzyme, with the addition of the transcription-specificity factor RAP94, is used for early gene expression.

It localises to the virion. It carries out the reaction RNA(n) + a ribonucleoside 5'-triphosphate = RNA(n+1) + diphosphate. Its function is as follows. Part of the DNA-dependent RNA polymerase which catalyzes the transcription of viral DNA into RNA using the four ribonucleoside triphosphates as substrates. Responsible for the transcription of early, intermediate and late genes. DNA-dependent RNA polymerase associates with the early transcription factor (ETF) thereby allowing the early genes transcription. Late transcription, and probably also intermediate transcription, require newly synthesized RNA polymerase. This chain is DNA-directed RNA polymerase 35 kDa subunit (RPO35), found in Ovis aries (Sheep).